The chain runs to 181 residues: Shikimate kinase 2 (181 aa).

Position 12–17 (12–17 (GCGKTT)) interacts with ATP. Residues Thr-16 and Asp-32 each coordinate Mg(2+). The substrate site is built by Asp-34, Arg-58, and Gly-79. The segment at 112–126 (EAEPEADLRPTLTGK) is LID domain. ATP is bound at residue Arg-120. Arg-139 is a substrate binding site.

This sequence belongs to the shikimate kinase family. AroL subfamily. Monomer. Mg(2+) serves as cofactor.

The protein resides in the cytoplasm. It catalyses the reaction shikimate + ATP = 3-phosphoshikimate + ADP + H(+). The protein operates within metabolic intermediate biosynthesis; chorismate biosynthesis; chorismate from D-erythrose 4-phosphate and phosphoenolpyruvate: step 5/7. Its function is as follows. Catalyzes the specific phosphorylation of the 3-hydroxyl group of shikimic acid using ATP as a cosubstrate. This chain is Shikimate kinase 2, found in Salmonella enteritidis PT4 (strain P125109).